Consider the following 282-residue polypeptide: Transcription factor MYB1 (282 aa).

2 consecutive HTH myb-type domains span residues K9–L61 and R62–V116. 2 DNA-binding regions (H-T-H motif) span residues W37–L61 and W89–L112. A disordered region spans residues E258–S282. The span at D260–L270 shows a compositional bias: basic and acidic residues. Residues M271–S282 are compositionally biased toward gly residues.

The protein localises to the nucleus. Transcription activator involved in the spatiotemporal regulation of flavonoid biosynthesis specifically in the corms of Montbretia. Activates the promoters of enzymes involved in the biosynthesis of the flavonol kaempferol and the flavonol-glycoside kaempferol-rhamnoside. This Crocosmia x crocosmiiflora (Montbretia) protein is Transcription factor MYB1.